The following is a 616-amino-acid chain: MAU2 chromatid cohesion factor homolog (616 aa).

TPR repeat units follow at residues 90-123 (FDTA…SQHN), 445-478 (GSFY…ANAE), and 485-518 (SCSL…ASKI).

Belongs to the SCC4/mau-2 family. As to quaternary structure, component of the cohesin loading complex.

Its subcellular location is the nucleus. It is found in the nucleoplasm. Its function is as follows. Required for association of the cohesin complex with chromatin during interphase. Plays a role in sister chromatid cohesion and normal progression through prometaphase. This Culex quinquefasciatus (Southern house mosquito) protein is MAU2 chromatid cohesion factor homolog.